The primary structure comprises 1528 residues: Zinc finger FYVE domain-containing protein 16 (1528 aa).

Ser120 bears the Phosphoserine mark. The interval 629-664 is disordered; it reads TQAVGGARPKQLLSLPPGTRSSKELNKPDVVDVPES. Positions 649-658 are enriched in basic and acidic residues; the sequence is SSKELNKPDV. The FYVE-type zinc finger occupies 735–793; that stretch reads DSEAPNCMNCQVKFTFTKRRHHCRACGKVFCGVCCNRKCKLQYLEKEARVCVICYETIN. 8 residues coordinate Zn(2+): Cys741, Cys744, Cys757, Cys760, Cys765, Cys768, Cys785, and Cys788. A phosphoserine mark is found at Ser803, Ser833, Ser884, and Ser927. Residues 819-849 are disordered; it reads TDQPLQETQTSSTPSPTTLPISALKQPNVEG. Residues 821–838 are compositionally biased toward low complexity; it reads QPLQETQTSSTPSPTTLP. Residues 928 to 949 form a disordered region; sequence PTCHTAPVERLPGNTGTEGLPM.

In terms of assembly, interacts (via C-terminus) with TOM1 (via C-terminus); interaction is required to target TOM1 to endosomes. Does not interact with TOM1L1 or TOM1L2.

The protein resides in the cytoplasm. It localises to the early endosome membrane. Functionally, may be involved in regulating membrane trafficking in the endosomal pathway. Overexpression induces endosome aggregation. Required to target TOM1 to endosomes. The sequence is that of Zinc finger FYVE domain-containing protein 16 (Zfyve16) from Mus musculus (Mouse).